A 3072-amino-acid chain; its full sequence is MFFKRQKGQYHEVERVTRFKLIKSGKHWLRAATSQFGLLRLMKGSDVSSTEVKVVEEQSVEKSGLNYLKGIIATGAVLGGAVVTSSSVYAEEEQAHEKVIDTRDVLATRGEAVLSEEAATTLSSTEANPVESLSDTLSASESTSASSSVSTSISVSESFSVSGSLSYSTSLSQSVSASASASESLSVSSSASDSVSASTSTSASASQSVSASQKSTISTSESTRSESSQQSTEASSQTGRRRTRRAVTESAPNVEYHDVKGDMIQSVTTSFDDTSRLLTWTINLTPRQVKSNLGALVSISGNQETRTVTINGKNAANGGVYNSGGAWNLYTGESVNNNVLRITTQVNDTGGEVKLGLRLVTSDKKITKTNLPLEFSQVAATTNGSWDKAGYNTTIVEKDTERPVVNVPSEITVYRGESFEYFATVTDNSNAFDLAKTVVRWLYNNQPGRGTEWLQYSVTQVGNQLKVRIFGNVPIDTTIGDYTRYVVATDAAGNVNATQTEMGNAAVDKTSVNGQFKLIIRFRIKTPENTVFVNNPNQLTEVEKNLVREAVKKSNPDLRAQDVLNSNYVTGITVSNNGTTTITYRDGRKDIIDGSKFIDTRAGSISKSQSTSNSISVSLSKSESASASLVTSKLNSISSSASVSASTSISTSGSVSASESASTSSSVSASESASTSASVSASESASTSASVSASTSASTSASVSASTSASTSASTSASKSASTSASVSASTSASTSASVSASESASTSASVSASTSASTSASVSASTSASTSASVSASESASTSASVSASTSASTSASVSASESASTSASVSASTSASTSASVSASASASTSASVSASTSASTSASVSASASASTSASVSASTSASTSASVSASESASTSASVSASESASTSASVSASESASTSASVSASESASTSASVSASTSASTSASVSASESASTSASVSASESASTSASVSASESASTSASVSASESASTSASVSASTSASTSASVSASTSASTSASVSASTSASTSASVSASTSASTSASVSASESASTSASVSASESASTSASVSASTSASTSASVSASESASTSASVSASESASTSASESASESASTSASVSASESASTSASVSASESSSTSASVSASESSSTSASVSASESASTSASVSASESASTSASESASESASTSASVSASESASTSASVSASESASTSASVSASESVSTSASVSASESASTSASVSASESASTSASESASESASTSASVSASESASTSASVSASESASTSASVSASTSASTSASVSASESASTSASVSASESASTSASVSASESASTSASVSASESVSTSASVSASESASTSASVSASESASTSASESASESASTSASVSASESASTSASVSASESASTSASVSASTSASTSASVSASESASTSASVSASESASTSASVSASESASTSASVSASTSASTSASVSASESASTSTSVSTSTSASTSASVSASESASTSASVSASESASTSASVSASTSASTSASVSASESASTSASVSASESASTSASVSASESASTSASVSASESASTSASVSASTSASTSASVSASESASTSASVSASESASTSASVSASESASTSASVSASESASTSASVSASESASTSASVSASESASTSASVSASESASTSASVSASESASTSASVSASESASTSASVSASESASTSASVSASESASTSASVSASESASTSASVSASESASTSASVSASESASTSASVSASESASTSASVSASESASTSASVSASESASTSASVSASESASTSASVSASESASTSASVSASESASTSASVSASESASTSASVSASESASTSASVSASESASTSASVSASESASTSASVSASESASTSASVSASTSTSTSASVSASESASTSASVSASESASTSASVSASESASTSASVSASESASTSASVSASESASTSASVSASESASTSASVSASESASTSASVSASESASTSASVSASESASTSASVSASTSASTSASVSASESASTSASVSASESASTSASVSASESASTSASVSASESASTSASVSASESASTSASVSASESASTSASVSASESASTSASVSASESASTSASVSASKSASTSESASTSASVSASESASTSASVSASESASTSASVSASESVSTSASVSASDSASISASVLASESASTSASVSASESASTSASVSASESASTSASVSASESASTSSSVSASESASTSASVSASESASTSASVSASTSASTSASVSASESASTSASVSASESASTSASVSASESASTSASVSASESASTSASVSASESASTSASVSASESASTSASVSASESASTSASVSASTSASTSASVSASESASTSASVSSSESASTSASVSASESASTSASVSASESASTSASVSASESASTSASVSASESASTSASVSASTSASTSASVSASESASTSASVSASESASTSASVSASESASTSASVSASESASTSASVSASTSASTSASVSASESASTSASVSASESASTSASVSASTSASTSASVSASESASTSASVSASESASTSASVSASESASTSASVSASESASTSASVSASESASTSASVSASESASTSASVSASESASTSASVSASMSASTSASVSVSESTSTSASVSANESASTSASVSASESASTSASVSASESASTSASVSASESASTSASVSASESASTSASVSASESASTSASVSASESASTSASVSASESASTSASVSASESASTSASVSASESASTSASVSASTSASTSASVSANESASTSASVSASESASTSASVSASESASTSASVSASESASTSASVSASESASTSASVSASTSASTSASVSANESASTSASVSASESASTSASVSASESASTSASVSASESASTSASVSASESASTSASVSASTSASTSASVSASESASTSASASASESASTSASVSASESASTSASVSASESASTSASVSASESASTNASVSVSESMSVSESLSLSISTSVLHSQLNDIYESELYSLSLSESLSASQSLSQSLSESQSSSASQSMHDRISKGQLPRTGESENKASILALGLGALGLAFKKRKKNESED.

The signal sequence occupies residues 1-85 (MFFKRQKGQY…AVLGGAVVTS (85 aa)). Disordered stretches follow at residues 117–147 (EAAT…SASS), 182–254 (SESL…APNV), 876–909 (SAST…SVSA), 936–969 (SAST…SVSA), 1024–2085 (SASV…SVSA), 2106–2139 (SAST…SVSA), 2173–2223 (VSAS…SVSA), 2250–2595 (SAST…SVSA), 2625–2965 (TSAS…NASV), and 3014–3045 (SQSL…GESE). The span at 118–127 (AATTLSSTEA) shows a compositional bias: polar residues. Residues 123–236 (SSTEANPVES…SSQQSTEASS (114 aa)) are ser-rich region 1 (SSR1). Composition is skewed to low complexity over residues 131-147 (ESLS…SASS) and 182-238 (SESL…SSQT). A basic region (BR) region spans residues 237–603 (QTGRRRTRRA…GSKFIDTRAG (367 aa)). The ser-rich region 2 (SSR2) stretch occupies residues 604-3028 (SISKSQSTSN…ESQSSSASQS (2425 aa)). The segment covering 3014 to 3028 (SQSLSESQSSSASQS) has biased composition (low complexity). The short motif at 3038-3042 (LPRTG) is the LPXTG sorting signal element. Residue T3041 is modified to Pentaglycyl murein peptidoglycan amidated threonine. Residues 3042–3072 (GESENKASILALGLGALGLAFKKRKKNESED) constitute a propeptide, removed by sortase.

This sequence belongs to the serine-rich repeat protein (SRRP) family. In terms of assembly, both SSR domains in the unglycosylated protein bind to Asp2 and Asp3; glycosylated protein binds less well. Interacts with the human cell surface glycoprotein GP1BA. Proteolytically cleaved by a metalloprotease. In terms of processing, both SSR1 and SSR2 domains are glycosylated. A truncated derivative (residues 1-2062) contains 105 nmol per nmol of protein, suggesting at least 10% of the apparent molecular weight is due to carbohydrates. Glucose and N-acetylglucosamine are present in a ratio of 30:73 residues per truncated polypeptide, as well as minor amounts of galactose and N-acetylgalactosamine. Glycosylation occurs intracellularly in the Ser-rich regions SSR1 and SSR2. Glycosylation of SSR2 domain may be required to prevent aggregation of GspB. It is probable that most of the Ser residues in SSR1 and SSR2 are O-GlcNAcylated. Sequential glycosylation by sugar transferases are able to generate complex sugar polymorphisms.

The protein localises to the secreted. Its subcellular location is the cell wall. Its function is as follows. Plays a role in virulence and host-pathogen interactions. Mediates binding to human platelets via interaction with the human cell surface glycoprotein GP1BA. Plays a positive role in biofilm formation, possibly by self-association via the basic region (BR). The polypeptide is Platelet binding protein GspB (gspB) (Streptococcus gordonii).